The primary structure comprises 128 residues: Large ribosomal subunit protein bL17 (128 aa).

This sequence belongs to the bacterial ribosomal protein bL17 family. As to quaternary structure, part of the 50S ribosomal subunit. Contacts protein L32.

In Streptococcus suis (strain 98HAH33), this protein is Large ribosomal subunit protein bL17.